A 398-amino-acid chain; its full sequence is Beta-1,4-galactosyltransferase 1 (398 aa).

The Cytoplasmic segment spans residues 1–24 (MRLREPLLSGSAAMPGASLQRACR). A helical; Signal-anchor for type II membrane protein transmembrane segment spans residues 25–44 (LLVAVCALHLGVTLVYYLAG). The Lumenal portion of the chain corresponds to 45–398 (RDLSRLPQLV…QITVDIGTPS (354 aa)). Residues 61–76 (QGGSNSAAAIGQSSGE) are compositionally biased toward polar residues. The tract at residues 61–117 (QGGSNSAAAIGQSSGELRTGGARPPPPLGASSQPRPGGDSSPVVDSGPGPASNLTSV) is disordered. N-linked (GlcNAc...) asparagine glycosylation is present at asparagine 113. An intrachain disulfide couples cysteine 130 to cysteine 172. Residues 183–187 (PFRNR), 222–224 (FNR), 249–250 (VD), and tryptophan 310 contribute to the UDP-alpha-D-galactose site. A disulfide bond links cysteine 243 and cysteine 262. Aspartate 250 provides a ligand contact to Mn(2+). 312-315 (GEDD) serves as a coordination point for N-acetyl-D-glucosamine. Histidine 343 is a Mn(2+) binding site. 343–346 (HSRD) lines the UDP-alpha-D-galactose pocket. An N-acetyl-D-glucosamine-binding site is contributed by arginine 355.

It belongs to the glycosyltransferase 7 family. In terms of assembly, homodimer; and heterodimer with alpha-lactalbumin to form lactose synthase. Interacts (via N-terminal cytoplasmic domain) with UBE2Q1 (via N-terminus); the interaction is direct. Requires Mn(2+) as cofactor. Post-translationally, the soluble form derives from the membrane forms by proteolytic processing. Ubiquitously expressed, but at very low levels in fetal and adult brain.

It localises to the golgi apparatus. It is found in the golgi stack membrane. The protein resides in the cell membrane. The protein localises to the cell surface. Its subcellular location is the cell projection. It localises to the filopodium. It is found in the secreted. It catalyses the reaction D-glucose + UDP-alpha-D-galactose = lactose + UDP + H(+). The catalysed reaction is an N-acetyl-beta-D-glucosaminyl derivative + UDP-alpha-D-galactose = a beta-D-galactosyl-(1-&gt;4)-N-acetyl-beta-D-glucosaminyl derivative + UDP + H(+). It carries out the reaction N-acetyl-D-glucosamine + UDP-alpha-D-galactose = beta-D-galactosyl-(1-&gt;4)-N-acetyl-D-glucosamine + UDP + H(+). The enzyme catalyses a beta-D-GlcNAc-(1-&gt;3)-beta-D-Gal-(1-&gt;4)-beta-D-Glc-(1&lt;-&gt;1)-Cer(d18:1(4E)) + UDP-alpha-D-galactose = a neolactoside nLc4Cer(d18:1(4E)) + UDP + H(+). It catalyses the reaction a beta-D-glucosylceramide + UDP-alpha-D-galactose = a beta-D-galactosyl-(1-&gt;4)-beta-D-glucosyl-(1&lt;-&gt;1)-ceramide + UDP + H(+). The catalysed reaction is a neolactoside IV(3)-beta-GlcNAc-nLc4Cer + UDP-alpha-D-galactose = a neolactoside nLc6Cer + UDP + H(+). The protein operates within protein modification; protein glycosylation. Functionally, the Golgi complex form catalyzes the production of lactose in the lactating mammary gland and could also be responsible for the synthesis of complex-type N-linked oligosaccharides in many glycoproteins as well as the carbohydrate moieties of glycolipids. Its function is as follows. The cell surface form functions as a recognition molecule during a variety of cell to cell and cell to matrix interactions, as those occurring during development and egg fertilization, by binding to specific oligosaccharide ligands on opposing cells or in the extracellular matrix. This Homo sapiens (Human) protein is Beta-1,4-galactosyltransferase 1.